A 340-amino-acid polypeptide reads, in one-letter code: MLTLGLESSCDETSCALVENGKILANRIASQDIHAAYGGVIPELASRAHLQIFPKLLAAVAQDAEVSLEDVELISVANTPGLIGALSVGVNFAKGLASGLKKTLIGVNHVEAHLYAACLEEPSIRFPALGLAISGAHTSLFLMPNATTFLLIGKTRDDAIGETFDKVARFLGLPYPGGQKLEELAQDGDEEAYPFSRAKVSGNDFSFSGLKTAVLYALKGNNSSAKAPFPEVSETQKRNIAASFQKAAFMTIAQKLPDIVKAFSCESLIVGGGVANNRYFRRLLNQTCSLPTYFPSSQLCSDNAAMIAGLGERLFCNQTYVSKEVIPCARYQWESACLSH.

His109 and His113 together coordinate Fe cation. Residues 132–136 (AISGA), Asp165, Gly178, and Asn277 contribute to the substrate site. Asp302 contributes to the Fe cation binding site.

The protein belongs to the KAE1 / TsaD family. The cofactor is Fe(2+).

The protein localises to the cytoplasm. It carries out the reaction L-threonylcarbamoyladenylate + adenosine(37) in tRNA = N(6)-L-threonylcarbamoyladenosine(37) in tRNA + AMP + H(+). Functionally, required for the formation of a threonylcarbamoyl group on adenosine at position 37 (t(6)A37) in tRNAs that read codons beginning with adenine. Is involved in the transfer of the threonylcarbamoyl moiety of threonylcarbamoyl-AMP (TC-AMP) to the N6 group of A37, together with TsaE and TsaB. TsaD likely plays a direct catalytic role in this reaction. This Chlamydia muridarum (strain MoPn / Nigg) protein is tRNA N6-adenosine threonylcarbamoyltransferase.